The following is a 248-amino-acid chain: 1-(5-phosphoribosyl)-5-[(5-phosphoribosylamino)methylideneamino] imidazole-4-carboxamide isomerase (248 aa).

Aspartate 11 (proton acceptor) is an active-site residue. The active-site Proton donor is aspartate 132.

The protein belongs to the HisA/HisF family.

The protein resides in the cytoplasm. It catalyses the reaction 1-(5-phospho-beta-D-ribosyl)-5-[(5-phospho-beta-D-ribosylamino)methylideneamino]imidazole-4-carboxamide = 5-[(5-phospho-1-deoxy-D-ribulos-1-ylimino)methylamino]-1-(5-phospho-beta-D-ribosyl)imidazole-4-carboxamide. It participates in amino-acid biosynthesis; L-histidine biosynthesis; L-histidine from 5-phospho-alpha-D-ribose 1-diphosphate: step 4/9. The chain is 1-(5-phosphoribosyl)-5-[(5-phosphoribosylamino)methylideneamino] imidazole-4-carboxamide isomerase from Bradyrhizobium diazoefficiens (strain JCM 10833 / BCRC 13528 / IAM 13628 / NBRC 14792 / USDA 110).